The following is a 2382-amino-acid chain: Nonribosomal peptide synthetase chyA (2382 aa).

The adenylation 1 stretch occupies residues 204-607 (QKCATQPESI…LGRKDHQVKI (404 aa)). In terms of domain architecture, Carrier 1 spans 745–821 (TPTTQNQRIL…DMASVLVKDH (77 aa)). Ser782 is subject to O-(pantetheine 4'-phosphoryl)serine. The condensation 1 stretch occupies residues 857-1269 (EDVYPCTHMQ…LVPPEDMATL (413 aa)). The adenylation 2 stretch occupies residues 1294-1687 (GQPDTLAIHS…VGRKDDQVKL (394 aa)). The 77-residue stretch at 1833 to 1909 (VPVSIHGRKV…GLSLKCATEN (77 aa)) folds into the Carrier 2 domain. Ser1870 bears the O-(pantetheine 4'-phosphoryl)serine mark. Positions 1967–2373 (MTLHNFYSRY…FSDVIESLAS (407 aa)) are condensation 2.

This sequence belongs to the NRP synthetase family.

It functions in the pathway pigment biosynthesis. Its function is as follows. Nonribosomal peptide synthetase; part of the gene cluster that mediates the biosynthesis of the yellow pigment chrysogine. the NRPS chyA mediates the condensation of anthranilic acid and alanine into the intermediate 2-(2-aminopropanamido)benzoic acid. The remainder of the pathway is highly branched yielding at least 13 chrysogine-related compounds. The malonyl transferase chyE converts 2-(2-aminopropanamido)benzoic acid and 2-(2-aminopropanamido)benzamidine into 2-(2-(2-carboxyacetamido)propanamido)benzoic acid and 3-((1-((2-carbamoylphenyl)amino)-1-oxopropan-2-yl)amino)-3-oxopropanoic acid, respectively. ChyD is an amidase, being responsible for the amidation of the carboxylic acid moiety of 2-(2-aminopropanamido)benzoic acid, 2-(2-(2-carboxyacetamido)propanamido)benzoic acid and 2-(2-((4-amino-1-carboxy-4-oxobutyl)amino)propanamido)benzoic acid. ChyC is involved in the same reactions as ChyD, but plays a more minor role in the amidation reactions compared to chyD. The oxidoreductases chyH and chyM are involved in oxidation reactions that form N-pyruvoylanthranilamide from 2-(2-aminopropanamido)benzamidine and (1-((2-carbamoylphenyl)amino)-1-oxopropan-2-yl)glutamine, respectively. N-pyruvoylanthranilamide is further converted via two further branches in the pathway, yielding chrysogine and additional chrysogine-related coumpounds. Chrysogine is likely formed by a spontaneous ring closure from N-pyruvoylanthranilamide. This chain is Nonribosomal peptide synthetase chyA, found in Penicillium rubens (strain ATCC 28089 / DSM 1075 / NRRL 1951 / Wisconsin 54-1255) (Penicillium chrysogenum).